The following is a 269-amino-acid chain: Hydroxyethylthiazole kinase (269 aa).

Residue methionine 46 coordinates substrate. ATP contacts are provided by arginine 121 and threonine 166. Glycine 193 contacts substrate.

Belongs to the Thz kinase family. It depends on Mg(2+) as a cofactor.

The enzyme catalyses 5-(2-hydroxyethyl)-4-methylthiazole + ATP = 4-methyl-5-(2-phosphooxyethyl)-thiazole + ADP + H(+). The protein operates within cofactor biosynthesis; thiamine diphosphate biosynthesis; 4-methyl-5-(2-phosphoethyl)-thiazole from 5-(2-hydroxyethyl)-4-methylthiazole: step 1/1. Catalyzes the phosphorylation of the hydroxyl group of 4-methyl-5-beta-hydroxyethylthiazole (THZ). This Limosilactobacillus reuteri (strain DSM 20016) (Lactobacillus reuteri) protein is Hydroxyethylthiazole kinase.